The chain runs to 129 residues: Glycine cleavage system H protein (129 aa).

The 83-residue stretch at 24-106 folds into the Lipoyl-binding domain; the sequence is AVRIGLSAYA…HGEGWLLVIQ (83 aa). Residue K65 is modified to N6-lipoyllysine.

Belongs to the GcvH family. As to quaternary structure, the glycine cleavage system is composed of four proteins: P, T, L and H. It depends on (R)-lipoate as a cofactor.

Functionally, the glycine cleavage system catalyzes the degradation of glycine. The H protein shuttles the methylamine group of glycine from the P protein to the T protein. In Synechococcus sp. (strain WH7803), this protein is Glycine cleavage system H protein.